The following is a 204-amino-acid chain: Peptidyl-tRNA hydrolase (204 aa).

Tyrosine 14 is a tRNA binding site. Histidine 19 functions as the Proton acceptor in the catalytic mechanism. 3 residues coordinate tRNA: phenylalanine 64, asparagine 66, and asparagine 112.

It belongs to the PTH family. In terms of assembly, monomer.

The protein resides in the cytoplasm. The catalysed reaction is an N-acyl-L-alpha-aminoacyl-tRNA + H2O = an N-acyl-L-amino acid + a tRNA + H(+). Its function is as follows. Hydrolyzes ribosome-free peptidyl-tRNAs (with 1 or more amino acids incorporated), which drop off the ribosome during protein synthesis, or as a result of ribosome stalling. Functionally, catalyzes the release of premature peptidyl moieties from peptidyl-tRNA molecules trapped in stalled 50S ribosomal subunits, and thus maintains levels of free tRNAs and 50S ribosomes. This is Peptidyl-tRNA hydrolase from Azorhizobium caulinodans (strain ATCC 43989 / DSM 5975 / JCM 20966 / LMG 6465 / NBRC 14845 / NCIMB 13405 / ORS 571).